A 584-amino-acid chain; its full sequence is 2-succinyl-5-enolpyruvyl-6-hydroxy-3-cyclohexene-1-carboxylate synthase (584 aa).

The protein belongs to the TPP enzyme family. MenD subfamily. As to quaternary structure, homodimer. It depends on Mg(2+) as a cofactor. The cofactor is Mn(2+). Thiamine diphosphate serves as cofactor.

The catalysed reaction is isochorismate + 2-oxoglutarate + H(+) = 5-enolpyruvoyl-6-hydroxy-2-succinyl-cyclohex-3-ene-1-carboxylate + CO2. It functions in the pathway quinol/quinone metabolism; 1,4-dihydroxy-2-naphthoate biosynthesis; 1,4-dihydroxy-2-naphthoate from chorismate: step 2/7. The protein operates within quinol/quinone metabolism; menaquinone biosynthesis. In terms of biological role, catalyzes the thiamine diphosphate-dependent decarboxylation of 2-oxoglutarate and the subsequent addition of the resulting succinic semialdehyde-thiamine pyrophosphate anion to isochorismate to yield 2-succinyl-5-enolpyruvyl-6-hydroxy-3-cyclohexene-1-carboxylate (SEPHCHC). The polypeptide is 2-succinyl-5-enolpyruvyl-6-hydroxy-3-cyclohexene-1-carboxylate synthase (Bacillus anthracis).